Reading from the N-terminus, the 538-residue chain is Coiled-coil domain-containing protein 8 (538 aa).

Residues 58–128 are disordered; sequence IMEKSTPHPP…QGPRRGKKVR (71 aa). Basic residues predominate over residues 119–128; it reads QGPRRGKKVR. Serine 142, serine 146, and serine 261 each carry phosphoserine. The segment at 213–473 is disordered; that stretch reads WAPRAGPGVG…GTAPGARARK (261 aa). Residues 301-313 are compositionally biased toward basic and acidic residues; that stretch reads DSQREEAIADQRE. Low complexity predominate over residues 321 to 332; the sequence is AGAPADQGAEAA. A coiled-coil region spans residues 349-366; it reads AEEGAEAADNQREEAADN. Composition is skewed to basic and acidic residues over residues 357–373, 381–392, and 405–419; these read DNQR…EAPA, DNHREEAADNQR, and DNQR…RERA. Low complexity-rich tracts occupy residues 428 to 438 and 458 to 469; these read QRAQARAGQRA and AAQGTTGTAPGA. A PxLPxI/L motif; mediates interaction with ANKRA2 motif is present at residues 500–506; it reads PRLPTLP. Positions 514–535 form a coiled coil; that stretch reads EARNLRVLRAEARAEAEQGEQE.

Component of the 3M complex, composed of core components CUL7, CCDC8 and OBSL1. Interacts (via PxLPxI/L motif) with ANKRA2 (via ankyrin repeats); may link the 3M complex to histone deacetylases including HDAC4 and HDAC5. As to expression, widely expressed with low levels in spleen, skeletal muscle, small intestine, kidney and liver.

The protein resides in the cytoplasm. It localises to the cytoskeleton. It is found in the microtubule organizing center. Its subcellular location is the centrosome. In terms of biological role, core component of the 3M complex, a complex required to regulate microtubule dynamics and genome integrity. It is unclear how the 3M complex regulates microtubules, it could act by controlling the level of a microtubule stabilizer. Required for localization of CUL7 to the centrosome. This chain is Coiled-coil domain-containing protein 8 (CCDC8), found in Homo sapiens (Human).